Reading from the N-terminus, the 93-residue chain is Large ribosomal subunit protein uL23 (93 aa).

This sequence belongs to the universal ribosomal protein uL23 family. Part of the 50S ribosomal subunit. Contacts protein L29, and trigger factor when it is bound to the ribosome.

Its function is as follows. One of the early assembly proteins it binds 23S rRNA. One of the proteins that surrounds the polypeptide exit tunnel on the outside of the ribosome. Forms the main docking site for trigger factor binding to the ribosome. This is Large ribosomal subunit protein uL23 from Wolinella succinogenes (strain ATCC 29543 / DSM 1740 / CCUG 13145 / JCM 31913 / LMG 7466 / NCTC 11488 / FDC 602W) (Vibrio succinogenes).